The following is a 757-amino-acid chain: Protein aardvark (757 aa).

Disordered regions lie at residues 39–63 (SSIN…DSNN), 122–166 (LEEN…SSIL), and 256–285 (SSNG…IESS). Residues 121–205 (ILEENNNNNN…FNQFNFLEGI (85 aa)) adopt a coiled-coil conformation. Low complexity-rich tracts occupy residues 125 to 164 (NNNN…SSSS) and 256 to 270 (SSNG…NNNN). The region spanning 310-356 (QFDIFLIPTEMLVHLLSFLSANDLWRISLTCKRIWYIVDVFKFWELL) is the F-box domain. ARM repeat units lie at residues 454–498 (GGIS…SNDN), 506–548 (GGIQ…VAIE), 549–591 (GGIQ…SAKE), 592–634 (GGIG…ISRQ), 635–678 (NGIQ…IARE), and 679–723 (GGIN…RSGG).

Belongs to the beta-catenin family.

The protein resides in the cytoplasm. The protein localises to the cell junction. Functionally, required to regulate pattern formation during multi-cellular stages of development and for the formation of adherens junctions. Plays a structural role during the regulation of stalk formation. Involved in cell signaling. Required for spore-cell differentiation. Overexpression increases number and size of cell junctions and reduces spore-cell formation. This Dictyostelium discoideum (Social amoeba) protein is Protein aardvark (aarA).